The sequence spans 88 residues: Small ribosomal subunit protein bS20 (88 aa).

Residues 1–12 are compositionally biased toward basic residues; that stretch reads MANHKSALKRAK. The segment at 1–23 is disordered; that stretch reads MANHKSALKRAKQNTIKQMRNRS.

This sequence belongs to the bacterial ribosomal protein bS20 family.

Binds directly to 16S ribosomal RNA. The chain is Small ribosomal subunit protein bS20 from Desulfatibacillum aliphaticivorans.